A 201-amino-acid polypeptide reads, in one-letter code: Basic helix-loop-helix transcription factor scleraxis (201 aa).

Disordered regions lie at residues 1–92 (MSFA…NSVN) and 148–177 (AFFH…QPKQ). Residues 59–69 (RRAGGGGPGGR) show a composition bias toward gly residues. A compositionally biased stretch (basic and acidic residues) spans 70 to 88 (PGREPRQRHTANARERDRT). One can recognise a bHLH domain in the interval 75-127 (RQRHTANARERDRTNSVNTAFTALRTLIPTEPADRKLSKIETLRLASSYISHL). The segment covering 157–167 (SPPPPPPPPPA) has biased composition (pro residues).

As to quaternary structure, efficient DNA binding requires dimerization with another bHLH protein. Dimerizes and binds the E-box consensus sequence with E12.

The protein resides in the nucleus. In terms of biological role, plays an early essential role in mesoderm formation, as well as a later role in formation of somite-derived chondrogenic lineages. The protein is Basic helix-loop-helix transcription factor scleraxis (SCX) of Homo sapiens (Human).